Consider the following 466-residue polypeptide: Soluble pyridine nucleotide transhydrogenase (466 aa).

Position 36-45 (36-45 (ERYQNVGGGC)) interacts with FAD.

Belongs to the class-I pyridine nucleotide-disulfide oxidoreductase family. It depends on FAD as a cofactor.

The protein localises to the cytoplasm. The catalysed reaction is NAD(+) + NADPH = NADH + NADP(+). Functionally, conversion of NADPH, generated by peripheral catabolic pathways, to NADH, which can enter the respiratory chain for energy generation. In Escherichia coli O81 (strain ED1a), this protein is Soluble pyridine nucleotide transhydrogenase.